We begin with the raw amino-acid sequence, 586 residues long: Arginine--tRNA ligase (586 aa).

The 'HIGH' region motif lies at 128–138 (ANPTGPLHVGH).

It belongs to the class-I aminoacyl-tRNA synthetase family. In terms of assembly, monomer.

Its subcellular location is the cytoplasm. The catalysed reaction is tRNA(Arg) + L-arginine + ATP = L-arginyl-tRNA(Arg) + AMP + diphosphate. This Coxiella burnetii (strain RSA 331 / Henzerling II) protein is Arginine--tRNA ligase.